The chain runs to 359 residues: DNA-directed RNA polymerase RPB3-11 homolog (359 aa).

The protein in the N-terminal section; belongs to the archaeal RpoD/eukaryotic RPB3 RNA polymerase subunit family. This sequence in the C-terminal section; belongs to the archaeal RpoL/eukaryotic RPB11/RPC19 RNA polymerase subunit family. In terms of assembly, part of the viral DNA-directed RNA polymerase that consists of 8 polII-like subunits (RPB1, RPB2, RPB3, RPB5, RPB6, RPB7, RPB9, RPB10), a capping enzyme and a termination factor.

It localises to the host cytoplasm. The protein resides in the virion. Functionally, component of the DNA-directed RNA polymerase (RNAP) that catalyzes the transcription in the cytoplasm of viral DNA into RNA using the four ribonucleoside triphosphates as substrates. The protein is DNA-directed RNA polymerase RPB3-11 homolog of Ornithodoros (relapsing fever ticks).